The sequence spans 394 residues: Protein TsgA homolog (394 aa).

12 consecutive transmembrane segments (helical) span residues 11-31 (WISY…GIVM), 51-71 (FLNA…EIIP), 76-96 (LVFG…GHNL), 101-121 (ISMF…TFLV), 134-154 (LLFT…AAAM), 162-182 (WYWV…LTLC), 206-226 (VGVL…LGFI), 246-266 (QLVS…SFIL), 274-294 (IVTV…STDN), 302-322 (ILAL…LGSL), 334-354 (FILT…GPIV), and 363-383 (LETA…LGFF).

It belongs to the major facilitator superfamily. TsgA family.

Its subcellular location is the cell inner membrane. This Yersinia pestis bv. Antiqua (strain Antiqua) protein is Protein TsgA homolog.